A 189-amino-acid polypeptide reads, in one-letter code: Protein jagunal homolog (189 aa).

Topologically, residues 1-34 (MSSRGVRAAGTDGNDFQNRQRIAQHYQESAQYKS) are cytoplasmic. The helical transmembrane segment at 35-55 (VLKWFFVPHFLILVFMWLKVG) threads the bilayer. At 56 to 75 (SEFLRYNFGWKNAFFERLDM) the chain is on the lumenal side. Residues 76 to 96 (PAAYPWEYVWCLSFIPIVLAL) form a helical membrane-spanning segment. Over 97–105 (SSFQRNKLK) the chain is Cytoplasmic. Residues 106 to 126 (VLHYAYYAEFICGIFPCMIGL) form a helical membrane-spanning segment. Residues 127–150 (GGQLPELLEYANDMEGSNTPTFKG) are Lumenal-facing. A helical transmembrane segment spans residues 151–171 (IFPMVIIWYIFFAVALQIHGF). The Cytoplasmic portion of the chain corresponds to 172–189 (SMYFMHHLAAAWAPVKRD).

This sequence belongs to the jagunal family.

The protein localises to the endoplasmic reticulum membrane. In Caenorhabditis briggsae, this protein is Protein jagunal homolog.